Reading from the N-terminus, the 436-residue chain is S-locus-specific glycoprotein S6 (436 aa).

Residues 1–31 form the signal peptide; sequence MKGVRKPYDNSYTLSFLLVFFVLILFCPAFS. A Bulb-type lectin domain is found at 34-156; that stretch reads TLSSTESLRI…SNNDASEYLW (123 aa). Residues asparagine 46, asparagine 64, asparagine 114, asparagine 121, asparagine 245, asparagine 261, and asparagine 390 are each glycosylated (N-linked (GlcNAc...) asparagine). One can recognise a PAN domain in the interval 351–431; that stretch reads CSGDGFTRMK…HGQDLYVRLA (81 aa). Cystine bridges form between cysteine 381/cysteine 406 and cysteine 389/cysteine 391.

In terms of tissue distribution, stigma.

In terms of biological role, involved in sporophytic self-incompatibility system (the inability of flowering plants to achieve self-fertilization). The polypeptide is S-locus-specific glycoprotein S6 (SLSG) (Brassica oleracea (Wild cabbage)).